Consider the following 245-residue polypeptide: 1-(5-phosphoribosyl)-5-[(5-phosphoribosylamino)methylideneamino] imidazole-4-carboxamide isomerase (245 aa).

Asp7 serves as the catalytic Proton acceptor. Asp129 functions as the Proton donor in the catalytic mechanism.

Belongs to the HisA/HisF family.

The protein resides in the cytoplasm. The catalysed reaction is 1-(5-phospho-beta-D-ribosyl)-5-[(5-phospho-beta-D-ribosylamino)methylideneamino]imidazole-4-carboxamide = 5-[(5-phospho-1-deoxy-D-ribulos-1-ylimino)methylamino]-1-(5-phospho-beta-D-ribosyl)imidazole-4-carboxamide. Its pathway is amino-acid biosynthesis; L-histidine biosynthesis; L-histidine from 5-phospho-alpha-D-ribose 1-diphosphate: step 4/9. The chain is 1-(5-phosphoribosyl)-5-[(5-phosphoribosylamino)methylideneamino] imidazole-4-carboxamide isomerase from Shewanella baltica (strain OS155 / ATCC BAA-1091).